Consider the following 125-residue polypeptide: Ribonuclease P protein component (125 aa).

Belongs to the RnpA family. In terms of assembly, consists of a catalytic RNA component (M1 or rnpB) and a protein subunit.

The enzyme catalyses Endonucleolytic cleavage of RNA, removing 5'-extranucleotides from tRNA precursor.. In terms of biological role, RNaseP catalyzes the removal of the 5'-leader sequence from pre-tRNA to produce the mature 5'-terminus. It can also cleave other RNA substrates such as 4.5S RNA. The protein component plays an auxiliary but essential role in vivo by binding to the 5'-leader sequence and broadening the substrate specificity of the ribozyme. In Clostridium botulinum (strain Eklund 17B / Type B), this protein is Ribonuclease P protein component.